A 203-amino-acid chain; its full sequence is uncharacterized protein (203 aa).

In terms of domain architecture, PilZ spans 90 to 188 (EKRQHVRVQP…YENIIGRYVM (99 aa)).

This sequence to A.aeolicus aq_820 and aq_1583.

This is an uncharacterized protein from Aquifex aeolicus (strain VF5).